A 93-amino-acid chain; its full sequence is Integration host factor subunit beta (93 aa).

This sequence belongs to the bacterial histone-like protein family. Heterodimer of an alpha and a beta chain.

Functionally, this protein is one of the two subunits of integration host factor, a specific DNA-binding protein that functions in genetic recombination as well as in transcriptional and translational control. The chain is Integration host factor subunit beta from Haemophilus ducreyi (strain 35000HP / ATCC 700724).